An 831-amino-acid polypeptide reads, in one-letter code: Intraflagellar transport protein 88 (831 aa).

TPR repeat units lie at residues 68-101 (IFKLLRDGMSAASCKDYVTALGRIREAIKLEQKV), 120-153 (TCIWMHWAQIQALGGQPEMALSTYEKIVKTAEGA), 156-189 (AQIRFNMGNINHNLGKYNEALKNFRMAIDQASPS), 248-281 (FDPLYTVLIGYYALGVPEKMIDAYSRLIDSSILI), 492-525 (RGVHTNIAFIYYLKGDYEASARHAQIALEIDPYD), 526-559 (SFAHINLGCTYSKTNQWELSLREFLKAQEINMES), 560-593 (VQATYNAGLVYFKQQEYKTAYSCFQKVASKLPSY), 595-627 (DAIYMSADCLARMSQIDEAIQMLSNLVTMFSAV), 632-665 (PSIYIRLGELYSIAGDEGQAAHYFKEAHRLVPFS), 666-699 (LAVINWLGSHYIKNELYEQARVCFEKASRVDTTT), and 700-733 (PKWSLAVAACLRKSKQYRDAIYEYKHILKRFPTN). The segment at 785–816 (RRNSVAAVGPGSRAGQDRFEASNNRVSSNTGD) is disordered. The span at 805–815 (ASNNRVSSNTG) shows a compositional bias: polar residues.

Its subcellular location is the cell projection. The protein localises to the cilium. It localises to the flagellum. The protein resides in the cytoplasm. It is found in the cytoskeleton. Its subcellular location is the flagellum axoneme. The protein localises to the flagellum basal body. Component of the intraflagellar transport complex B (IFT-B) involved in flagellar assembly. The chain is Intraflagellar transport protein 88 from Giardia intestinalis (strain ATCC 50803 / WB clone C6) (Giardia lamblia).